Here is a 281-residue protein sequence, read N- to C-terminus: Energy-coupling factor transporter ATP-binding protein EcfA1 (281 aa).

The 236-residue stretch at 7–242 (IAAEDITFRY…NQDLIKIGLD (236 aa)) folds into the ABC transporter domain. Residue 42 to 49 (GHNGSGKS) participates in ATP binding.

This sequence belongs to the ABC transporter superfamily. Energy-coupling factor EcfA family. In terms of assembly, forms a stable energy-coupling factor (ECF) transporter complex composed of 2 membrane-embedded substrate-binding proteins (S component), 2 ATP-binding proteins (A component) and 2 transmembrane proteins (T component).

It localises to the cell membrane. Functionally, ATP-binding (A) component of a common energy-coupling factor (ECF) ABC-transporter complex. Unlike classic ABC transporters this ECF transporter provides the energy necessary to transport a number of different substrates. The chain is Energy-coupling factor transporter ATP-binding protein EcfA1 from Bacillus licheniformis (strain ATCC 14580 / DSM 13 / JCM 2505 / CCUG 7422 / NBRC 12200 / NCIMB 9375 / NCTC 10341 / NRRL NRS-1264 / Gibson 46).